We begin with the raw amino-acid sequence, 210 residues long: Ribosomal RNA small subunit methyltransferase G (210 aa).

Residues G75, F80, E98–T100, A126–E127, and R141 contribute to the S-adenosyl-L-methionine site.

It belongs to the methyltransferase superfamily. RNA methyltransferase RsmG family.

The protein localises to the cytoplasm. Specifically methylates the N7 position of a guanine in 16S rRNA. The polypeptide is Ribosomal RNA small subunit methyltransferase G (Solibacter usitatus (strain Ellin6076)).